We begin with the raw amino-acid sequence, 443 residues long: Trigger factor (443 aa).

Residues 169 to 254 (GDIAFLDFSG…LNSIKEVQLP (86 aa)) form the PPIase FKBP-type domain.

It belongs to the FKBP-type PPIase family. Tig subfamily.

It localises to the cytoplasm. It carries out the reaction [protein]-peptidylproline (omega=180) = [protein]-peptidylproline (omega=0). Its function is as follows. Involved in protein export. Acts as a chaperone by maintaining the newly synthesized protein in an open conformation. Functions as a peptidyl-prolyl cis-trans isomerase. The protein is Trigger factor of Mycoplasmoides gallisepticum (strain R(low / passage 15 / clone 2)) (Mycoplasma gallisepticum).